Here is a 303-residue protein sequence, read N- to C-terminus: Glutathione transport system permease protein GsiD (303 aa).

6 helical membrane-spanning segments follow: residues 40–60, 105–125, 144–164, 165–185, 222–242, and 266–286; these read AMTAALFVILLIVVAIFARWI, LAAGVFAVFIGAAIGTLLGLL, LFAFPGILLAIAVVAVLGSGI, ANVIIAVAIFSIPAFARLVRG, IVVFFTMRIGTSIISAASLSF, and VIAPHVAVFPALAIFLTVLAF. One can recognise an ABC transmembrane type-1 domain in the interval 101-290; that stretch reads AQISLAAGVF…LTVLAFNLLG (190 aa).

Belongs to the binding-protein-dependent transport system permease family. The complex is composed of two ATP-binding proteins (GsiA), two transmembrane proteins (GsiC and GsiD) and a solute-binding protein (GsiB).

It is found in the cell inner membrane. Part of the ABC transporter complex GsiABCD involved in glutathione import. Probably responsible for the translocation of the substrate across the membrane. This chain is Glutathione transport system permease protein GsiD, found in Escherichia coli O157:H7.